We begin with the raw amino-acid sequence, 509 residues long: Histidine ammonia-lyase (509 aa).

Residues 144-146 (ASG) constitute a cross-link (5-imidazolinone (Ala-Gly)). 2,3-didehydroalanine (Ser) is present on Ser145.

Belongs to the PAL/histidase family. Post-translationally, contains an active site 4-methylidene-imidazol-5-one (MIO), which is formed autocatalytically by cyclization and dehydration of residues Ala-Ser-Gly.

Its subcellular location is the cytoplasm. It catalyses the reaction L-histidine = trans-urocanate + NH4(+). It functions in the pathway amino-acid degradation; L-histidine degradation into L-glutamate; N-formimidoyl-L-glutamate from L-histidine: step 1/3. The sequence is that of Histidine ammonia-lyase from Pseudoalteromonas atlantica (strain T6c / ATCC BAA-1087).